Reading from the N-terminus, the 360-residue chain is DNA replication and repair protein RecF (360 aa).

ATP is bound at residue 30–37 (GQNGSGKT).

The protein belongs to the RecF family.

Its subcellular location is the cytoplasm. In terms of biological role, the RecF protein is involved in DNA metabolism; it is required for DNA replication and normal SOS inducibility. RecF binds preferentially to single-stranded, linear DNA. It also seems to bind ATP. The chain is DNA replication and repair protein RecF from Shewanella sp. (strain W3-18-1).